The chain runs to 158 residues: Large ribosomal subunit protein uL15 (158 aa).

Residues 1–13 (MKLNEIKDNEGST) are compositionally biased toward basic and acidic residues. Positions 1-45 (MKLNEIKDNEGSTHSRKRLGRGIGSGSGKTGGRGVKGQKSRSGVA) are disordered. Gly residues predominate over residues 21-35 (RGIGSGSGKTGGRGV).

This sequence belongs to the universal ribosomal protein uL15 family. As to quaternary structure, part of the 50S ribosomal subunit.

Functionally, binds to the 23S rRNA. In Rhizobium johnstonii (strain DSM 114642 / LMG 32736 / 3841) (Rhizobium leguminosarum bv. viciae), this protein is Large ribosomal subunit protein uL15.